The primary structure comprises 201 residues: MAKIALILGSVRSPRVGNDVTGWVHDVLKSRPSDDLQIEPLVIADFNLPVYDEPVMPAMVPAMKQFTKEHSKRWSAAIASYQGYIFVIPEYNGGIAGGTKNAVDYLYNEWPGKPVAIISYGTQGGNRANAQLSESLELVMKMKVAPTKVLLPFAAGTDVFSAINDGVLGEESQKAWAEAGKKEDILKALDEVKELLKQPKE.

FMN contacts are provided by residues arginine 12, glutamate 90–glycine 93, and tyrosine 120.

Homodimer.

It carries out the reaction FMNH2 + NADP(+) = FMN + NADPH + 2 H(+). The enzyme catalyses FMNH2 + NAD(+) = FMN + NADH + 2 H(+). The protein operates within secondary metabolite biosynthesis; terpenoid biosynthesis. NAD(P)H-dependent FMN reductase; part of the gene cluster that mediates the biosynthesis of the meroterpenoids nectripenoids A and B, as well as cochliquninone D and isocochliquninone E. The pathway probably begins with the HR-PKS ntnH that catalyzes two chain-extension steps to form a reduced triketide, which then primes the SAT domain in the NR-PKS ntnG to initiate three more cycles of extension to give a linear hexaketide corresponding to the polyketide part of nectripenoids. The FAD-dependent monooxygenase ntnJ then performs an oxidative decarboxylation at C11 of the ntnH/ntnG product, via an electrophilic aromatic hydroxylation with concomitant ipso-decarboxylation. The membrane-bound polyprenyl transferase ntnF then introduces a farnesyl group before the FAD-dependent monooxygenase ntnK functions as the first epoxidase on terminal C12'-C13' olefin, followed by a second epoxidation on C7'-C8' catalyzed by ntnA. The terpene cyclase/mutase ntnI then initiates the sequential tricyclic ring formation through protonation of the terminal epoxide and catalyzes the regioselective and stereoselective 6/6/6-tricyclic ring formation. The cytochrome P450 monooxygenase ntnM may then hydroxylate C1'. This Nectria sp protein is NAD(P)H-dependent FMN reductase ntnL.